The chain runs to 87 residues: MKTFESLFAELSEKAATKQAGSLTVDELAKGTHFIGKKIVEEAGETWIAAEYEGADRTAEEMSQLIYHLQVMMIDRGITLEDIYKNL.

This sequence belongs to the PRA-PH family.

Its subcellular location is the cytoplasm. It carries out the reaction 1-(5-phospho-beta-D-ribosyl)-ATP + H2O = 1-(5-phospho-beta-D-ribosyl)-5'-AMP + diphosphate + H(+). Its pathway is amino-acid biosynthesis; L-histidine biosynthesis; L-histidine from 5-phospho-alpha-D-ribose 1-diphosphate: step 2/9. The chain is Phosphoribosyl-ATP pyrophosphatase from Bifidobacterium adolescentis (strain ATCC 15703 / DSM 20083 / NCTC 11814 / E194a).